A 176-amino-acid polypeptide reads, in one-letter code: 2-C-methyl-D-erythritol 2,4-cyclodiphosphate synthase (176 aa).

Asp22 and His24 together coordinate a divalent metal cation. 4-CDP-2-C-methyl-D-erythritol 2-phosphate contacts are provided by residues 22 to 24 and 48 to 49; these read DVH and HS. His56 lines the a divalent metal cation pocket. 4-CDP-2-C-methyl-D-erythritol 2-phosphate is bound by residues 70-72, 146-149, Phe153, and Arg156; these read DIG and TTSE.

It belongs to the IspF family. As to quaternary structure, homotrimer. A divalent metal cation is required as a cofactor.

The catalysed reaction is 4-CDP-2-C-methyl-D-erythritol 2-phosphate = 2-C-methyl-D-erythritol 2,4-cyclic diphosphate + CMP. It participates in isoprenoid biosynthesis; isopentenyl diphosphate biosynthesis via DXP pathway; isopentenyl diphosphate from 1-deoxy-D-xylulose 5-phosphate: step 4/6. Its function is as follows. Involved in the biosynthesis of isopentenyl diphosphate (IPP) and dimethylallyl diphosphate (DMAPP), two major building blocks of isoprenoid compounds. Catalyzes the conversion of 4-diphosphocytidyl-2-C-methyl-D-erythritol 2-phosphate (CDP-ME2P) to 2-C-methyl-D-erythritol 2,4-cyclodiphosphate (ME-CPP) with a corresponding release of cytidine 5-monophosphate (CMP). The polypeptide is 2-C-methyl-D-erythritol 2,4-cyclodiphosphate synthase (Xylella fastidiosa (strain 9a5c)).